The following is a 283-amino-acid chain: Aldo-keto reductase Mmcs_1938 (283 aa).

Tyr-58 acts as the Proton donor in catalysis. NADPH-binding residues include Gly-196, Leu-198, Val-200, Ile-236, Arg-238, Ser-239, Ala-240, Arg-244, Ser-247, Asn-248, and Arg-274.

It belongs to the aldo/keto reductase family.

The chain is Aldo-keto reductase Mmcs_1938 from Mycobacterium sp. (strain MCS).